A 479-amino-acid chain; its full sequence is UDP-N-acetylmuramoyl-L-alanyl-D-glutamate--2,6-diaminopimelate ligase (479 aa).

S21 contacts UDP-N-acetyl-alpha-D-muramoyl-L-alanyl-D-glutamate. Position 98–104 (98–104 (GTNGKSS)) interacts with ATP. UDP-N-acetyl-alpha-D-muramoyl-L-alanyl-D-glutamate is bound by residues 144-145 (TT), S171, Q177, and R179. K211 carries the N6-carboxylysine modification. Meso-2,6-diaminopimelate-binding positions include R372, 396-399 (DNPR), G446, and E450. Positions 396-399 (DNPR) match the Meso-diaminopimelate recognition motif motif.

It belongs to the MurCDEF family. MurE subfamily. Mg(2+) serves as cofactor. Post-translationally, carboxylation is probably crucial for Mg(2+) binding and, consequently, for the gamma-phosphate positioning of ATP.

Its subcellular location is the cytoplasm. The enzyme catalyses UDP-N-acetyl-alpha-D-muramoyl-L-alanyl-D-glutamate + meso-2,6-diaminopimelate + ATP = UDP-N-acetyl-alpha-D-muramoyl-L-alanyl-gamma-D-glutamyl-meso-2,6-diaminopimelate + ADP + phosphate + H(+). Its pathway is cell wall biogenesis; peptidoglycan biosynthesis. In terms of biological role, catalyzes the addition of meso-diaminopimelic acid to the nucleotide precursor UDP-N-acetylmuramoyl-L-alanyl-D-glutamate (UMAG) in the biosynthesis of bacterial cell-wall peptidoglycan. This is UDP-N-acetylmuramoyl-L-alanyl-D-glutamate--2,6-diaminopimelate ligase from Rickettsia conorii (strain ATCC VR-613 / Malish 7).